Consider the following 579-residue polypeptide: Laccase (579 aa).

The tat-type signal signal peptide spans 1–31 (MTDWSRRRFLQTGAALGIAGTLPQTTTEVSA). A Plastocyanin-like 1 domain is found at 82–214 (WGFDGSYPGP…AGLLGLYSIT (133 aa)). Residues His-145, His-147, His-192, and His-194 each contribute to the Cu cation site. The segment at 372-401 (VSDPSTPPEDASADPTSLSLPTPASYDESD) is disordered. The Plastocyanin-like 2 domain maps to 423-530 (LNGHVFGDED…NKMMIPFVVE (108 aa)). Asn-449 is a glycosylation site (N-linked (GlcNAc...) asparagine). Residues His-455, His-458, His-460, His-512, Cys-513, His-514, His-518, and Met-523 each coordinate Cu cation. The N-linked (GlcNAc...) asparagine glycan is linked to Asn-557.

The protein belongs to the multicopper oxidase family. It depends on Cu(2+) as a cofactor. Exported by the Tat system. In terms of processing, glycosylated.

The protein resides in the secreted. It catalyses the reaction 4 hydroquinone + O2 = 4 benzosemiquinone + 2 H2O. With respect to regulation, inhibited by 1 mM NaN(3), 10 mM thiourea, 10 mM 1,10-phenanthroline, 0.1 mM DL-dithiothreitol (DTT) and 1 mM L-cysteine. The inhibition by DTT and L-cysteine is likely caused by reduction of the oxidized substrate and not by inhibition of the enzyme. Functionally, catalyzes the oxidation of a wide variety of organic substrates, including bilirubin, syringaldazine (SGZ), 2,2'-azino-di-(3-ethylbenzothiazoline)-6-sulfonic acid (ABTS) and dimethoxyphenol (DMP). No oxidation of Fe(2+) or guaiacol. This chain is Laccase (lccA), found in Haloferax volcanii (strain ATCC 29605 / DSM 3757 / JCM 8879 / NBRC 14742 / NCIMB 2012 / VKM B-1768 / DS2) (Halobacterium volcanii).